Consider the following 284-residue polypeptide: Pantothenate synthetase (284 aa).

30 to 37 (MGALHNGH) contributes to the ATP binding site. The Proton donor role is filled by His37. A (R)-pantoate-binding site is contributed by Gln61. Gln61 is a beta-alanine binding site. An ATP-binding site is contributed by 147-150 (GEKD). Gln153 lines the (R)-pantoate pocket. Residues Leu176 and 184 to 187 (SSSR) contribute to the ATP site.

It belongs to the pantothenate synthetase family. In terms of assembly, homodimer.

It localises to the cytoplasm. The catalysed reaction is (R)-pantoate + beta-alanine + ATP = (R)-pantothenate + AMP + diphosphate + H(+). Its pathway is cofactor biosynthesis; (R)-pantothenate biosynthesis; (R)-pantothenate from (R)-pantoate and beta-alanine: step 1/1. Functionally, catalyzes the condensation of pantoate with beta-alanine in an ATP-dependent reaction via a pantoyl-adenylate intermediate. The chain is Pantothenate synthetase from Bartonella henselae (strain ATCC 49882 / DSM 28221 / CCUG 30454 / Houston 1) (Rochalimaea henselae).